A 39-amino-acid polypeptide reads, in one-letter code: Potassium channel toxin alpha-KTx 2.24 (39 aa).

3 cysteine pairs are disulfide-bonded: Cys-7/Cys-29, Cys-13/Cys-34, and Cys-17/Cys-36.

The protein belongs to the short scorpion toxin superfamily. Potassium channel inhibitor family. Alpha-KTx 02 subfamily. In terms of tissue distribution, expressed by the venom gland.

The protein localises to the secreted. In terms of biological role, blocks human voltage-gated potassium (Kv) channels Kv1.1/KCNA, Kv1.2/KCNA2 and Kv1.3/KCNA3. Exhibits high affinity for Kv1.2/KCNA2 and selectivity over Kv1.1/KCNA and Kv1.3/KCNA3. The chain is Potassium channel toxin alpha-KTx 2.24 from Centruroides bonito (Scorpion).